The sequence spans 164 residues: Protein SprT (164 aa).

The SprT-like domain maps to 14-156; it reads QQAETFFKRT…LCRRCREPLV (143 aa). A Zn(2+)-binding site is contributed by H69. Residue E70 is part of the active site. Position 73 (H73) interacts with Zn(2+).

Belongs to the SprT family. It depends on Zn(2+) as a cofactor.

It localises to the cytoplasm. The sequence is that of Protein SprT from Pseudomonas savastanoi pv. phaseolicola (strain 1448A / Race 6) (Pseudomonas syringae pv. phaseolicola (strain 1448A / Race 6)).